The following is a 202-amino-acid chain: Small ribosomal subunit protein uS4c (202 aa).

An S4 RNA-binding domain is found at 90 to 151 (MRLDNTIFRL…KQKSRFIITK (62 aa)).

Belongs to the universal ribosomal protein uS4 family. In terms of assembly, part of the 30S ribosomal subunit. Contacts protein S5. The interaction surface between S4 and S5 is involved in control of translational fidelity.

The protein localises to the plastid. It localises to the chloroplast. One of the primary rRNA binding proteins, it binds directly to 16S rRNA where it nucleates assembly of the body of the 30S subunit. In terms of biological role, with S5 and S12 plays an important role in translational accuracy. This Plagiochila adianthoides (Liverwort) protein is Small ribosomal subunit protein uS4c (rps4).